Reading from the N-terminus, the 673-residue chain is DNA ligase (673 aa).

NAD(+)-binding positions include 32–36, 81–82, and E111; these read DHVYD and SL. The active-site N6-AMP-lysine intermediate is K113. Residues R134, E171, K286, and K310 each coordinate NAD(+). Positions 404, 407, 422, and 428 each coordinate Zn(2+). The region spanning 595 to 673 is the BRCT domain; sequence NIIDEYKNKT…NEFWKKDNNF (79 aa).

Belongs to the NAD-dependent DNA ligase family. LigA subfamily. Mg(2+) is required as a cofactor. Mn(2+) serves as cofactor.

It carries out the reaction NAD(+) + (deoxyribonucleotide)n-3'-hydroxyl + 5'-phospho-(deoxyribonucleotide)m = (deoxyribonucleotide)n+m + AMP + beta-nicotinamide D-nucleotide.. DNA ligase that catalyzes the formation of phosphodiester linkages between 5'-phosphoryl and 3'-hydroxyl groups in double-stranded DNA using NAD as a coenzyme and as the energy source for the reaction. It is essential for DNA replication and repair of damaged DNA. This chain is DNA ligase, found in Ureaplasma urealyticum serovar 10 (strain ATCC 33699 / Western).